The chain runs to 322 residues: Tubulin alpha-4 chain (322 aa).

Residues serine 15, glycine 19, threonine 20, threonine 54, asparagine 81, and asparagine 103 each contribute to the GTP site. Glutamate 129 is a catalytic residue.

It belongs to the tubulin family. As to quaternary structure, dimer of alpha and beta chains. A typical microtubule is a hollow water-filled tube with an outer diameter of 25 nm and an inner diameter of 15 nM. Alpha-beta heterodimers associate head-to-tail to form protofilaments running lengthwise along the microtubule wall with the beta-tubulin subunit facing the microtubule plus end conferring a structural polarity. Microtubules usually have 13 protofilaments but different protofilament numbers can be found in some organisms and specialized cells. It depends on Mg(2+) as a cofactor. Some glutamate residues at the C-terminus are polyglycylated, resulting in polyglycine chains on the gamma-carboxyl group. Glycylation is mainly limited to tubulin incorporated into axonemes (cilia and flagella) whereas glutamylation is prevalent in neuronal cells, centrioles, axonemes, and the mitotic spindle. Both modifications can coexist on the same protein on adjacent residues, and lowering polyglycylation levels increases polyglutamylation, and reciprocally. The precise function of polyglycylation is still unclear. Post-translationally, some glutamate residues at the C-terminus are polyglutamylated, resulting in polyglutamate chains on the gamma-carboxyl group. Polyglutamylation plays a key role in microtubule severing by spastin (SPAST). SPAST preferentially recognizes and acts on microtubules decorated with short polyglutamate tails: severing activity by SPAST increases as the number of glutamates per tubulin rises from one to eight, but decreases beyond this glutamylation threshold.

The protein resides in the cytoplasm. It localises to the cytoskeleton. It carries out the reaction GTP + H2O = GDP + phosphate + H(+). In terms of biological role, tubulin is the major constituent of microtubules, a cylinder consisting of laterally associated linear protofilaments composed of alpha- and beta-tubulin heterodimers. Microtubules grow by the addition of GTP-tubulin dimers to the microtubule end, where a stabilizing cap forms. Below the cap, tubulin dimers are in GDP-bound state, owing to GTPase activity of alpha-tubulin. The chain is Tubulin alpha-4 chain from Gallus gallus (Chicken).